The primary structure comprises 354 residues: G-protein coupled receptor homolog US28 (354 aa).

Topologically, residues 1–37 are extracellular; sequence MTPTTTTAELTTEFDYDEDATPCVFTDVLNQSKPVTL. Asn-30 carries N-linked (GlcNAc...) asparagine; by host glycosylation. Residues 38–58 traverse the membrane as a helical segment; sequence FLYGVVFLFGSIGNFLVIFTI. The Cytoplasmic portion of the chain corresponds to 59–69; the sequence is TWRRRIQCSGD. Residues 70-90 traverse the membrane as a helical segment; it reads VYFINLAAADLLFVCTLPLWM. Residues 91–101 lie on the Extracellular side of the membrane; the sequence is QYLLDHNSLAS. Residues 102–122 traverse the membrane as a helical segment; it reads VPCTLLTACFYVAMFASLCFI. Residues 123–145 lie on the Cytoplasmic side of the membrane; that stretch reads TEIALDRYYAIVYMRYRPVKQAC. A helical membrane pass occupies residues 146-166; sequence LFSIFWWIFAVIIAIPHFMVV. At 167 to 183 the chain is on the extracellular side; sequence TKKDNQCMTDYDYLEVS. The helical transmembrane segment at 184-204 threads the bilayer; sequence YPIILNVELMLGAFVIPLSVI. The Cytoplasmic portion of the chain corresponds to 205 to 228; that stretch reads SYCYYRISRIVAVSQSRHKGRIVR. Residues 229-249 traverse the membrane as a helical segment; it reads VLIAVVLVFIIFWLPYHLTLF. The Extracellular segment spans residues 250-273; the sequence is VDTLKLLKWISSSCEFERSLKRAL. Residues 274 to 294 traverse the membrane as a helical segment; it reads ILTESLAFCHCCLNPLLYVFV. Topologically, residues 295-354 are cytoplasmic; sequence GTKFRQELHCLLAEFRQRLFSRDVSWYHSMSFSRRSSPSRRETSSDTLSDEVCRVSQIIP.

The protein belongs to the G-protein coupled receptor 1 family. In terms of assembly, interacts with host GPRASP1; this interaction targets US28 to lysosomes for degradation. Interacts with host CX3CL1/Fractalkine (via N-terminus). Interacts with host Gi alpha-1 subunit GNAI1; this interaction does not lead to the catalytic activation of Gi complex. In terms of processing, phosphorylated. High phosphorylation occurs concomitantly with receptor endocytosis and correlate with low receptor presence at the plasma membrane.

The protein localises to the host cell membrane. In terms of biological role, binds to a great number of different CC-chemokines including CCL5/RANTES, CCL2/MCP-1, CCL3/MIP-1-alpha as well as CX3CL1/Fractalkine. Transduces signals resulting in the activation of MAP kinase signaling pathways and augmentation of intracellular calcium ion levels, leading to alterations in chemotactic behavior of vascular smooth muscle cells and macrophages. The US28 receptor also exhibits high levels of agonist-independent signaling activity and agonist-independent endocytosis. Interacts with the host Gi complex without activating it, thereby probably interfering with the chemokine-Gi signaling. May also function as a G protein sink to sequester G protein from the cell surface via internalization. Interacts with endogenous Gaq/11 subunits and thereby constitutively activates phospholipase C. This is G-protein coupled receptor homolog US28 (US28) from Homo sapiens (Human).